The chain runs to 617 residues: Glutamyl-tRNA(Gln) amidotransferase subunit B, mitochondrial (617 aa).

A mitochondrion-targeting transit peptide spans 1-56 (MPRIPTSVLGKYLLSGQISRQGCVGARQITRHSALPSAAVSVANSARLLHVSSETV). Residues 53 to 90 (SETVPPPPAQPVPLRKQLKDEAKKAKKQGKKKSKGDSQ) form a disordered region. The segment covering 76–85 (KAKKQGKKKS) has biased composition (basic residues).

Belongs to the GatB/GatE family. GatB subfamily. In terms of assembly, subunit of the heterotrimeric GatCAB amidotransferase (AdT) complex, composed of A, B and C subunits.

It localises to the mitochondrion. It carries out the reaction L-glutamyl-tRNA(Gln) + L-glutamine + ATP + H2O = L-glutaminyl-tRNA(Gln) + L-glutamate + ADP + phosphate + H(+). Its function is as follows. Allows the formation of correctly charged Gln-tRNA(Gln) through the transamidation of misacylated Glu-tRNA(Gln) in the mitochondria. The reaction takes place in the presence of glutamine and ATP through an activated gamma-phospho-Glu-tRNA(Gln). The polypeptide is Glutamyl-tRNA(Gln) amidotransferase subunit B, mitochondrial (Fusarium vanettenii (strain ATCC MYA-4622 / CBS 123669 / FGSC 9596 / NRRL 45880 / 77-13-4) (Fusarium solani subsp. pisi)).